The primary structure comprises 305 residues: Homoserine O-acetyltransferase (305 aa).

The active-site Acyl-thioester intermediate is the C142. The substrate site is built by K163 and S192. H235 serves as the catalytic Proton acceptor. E237 is an active-site residue. Residue R249 coordinates substrate.

The protein belongs to the MetA family.

The protein localises to the cytoplasm. The enzyme catalyses L-homoserine + acetyl-CoA = O-acetyl-L-homoserine + CoA. It participates in amino-acid biosynthesis; L-methionine biosynthesis via de novo pathway; O-acetyl-L-homoserine from L-homoserine: step 1/1. Its function is as follows. Transfers an acetyl group from acetyl-CoA to L-homoserine, forming acetyl-L-homoserine. The protein is Homoserine O-acetyltransferase of Acetivibrio thermocellus (strain ATCC 27405 / DSM 1237 / JCM 9322 / NBRC 103400 / NCIMB 10682 / NRRL B-4536 / VPI 7372) (Clostridium thermocellum).